The chain runs to 294 residues: Acetyl-coenzyme A carboxylase carboxyl transferase subunit beta (294 aa).

The region spanning 30-294 is the CoA carboxyltransferase N-terminal domain; the sequence is IMTKCPECKK…PETGGESDGE (265 aa). The Zn(2+) site is built by Cys34, Cys37, Cys53, and Cys56. Residues 34–56 form a C4-type zinc finger; that stretch reads CPECKKIMYTKELQKNLMVCNYC.

This sequence belongs to the AccD/PCCB family. Acetyl-CoA carboxylase is a heterohexamer composed of biotin carboxyl carrier protein (AccB), biotin carboxylase (AccC) and two subunits each of ACCase subunit alpha (AccA) and ACCase subunit beta (AccD). Requires Zn(2+) as cofactor.

It localises to the cytoplasm. It catalyses the reaction N(6)-carboxybiotinyl-L-lysyl-[protein] + acetyl-CoA = N(6)-biotinyl-L-lysyl-[protein] + malonyl-CoA. Its pathway is lipid metabolism; malonyl-CoA biosynthesis; malonyl-CoA from acetyl-CoA: step 1/1. Component of the acetyl coenzyme A carboxylase (ACC) complex. Biotin carboxylase (BC) catalyzes the carboxylation of biotin on its carrier protein (BCCP) and then the CO(2) group is transferred by the transcarboxylase to acetyl-CoA to form malonyl-CoA. This Listeria welshimeri serovar 6b (strain ATCC 35897 / DSM 20650 / CCUG 15529 / CIP 8149 / NCTC 11857 / SLCC 5334 / V8) protein is Acetyl-coenzyme A carboxylase carboxyl transferase subunit beta.